The following is a 439-amino-acid chain: Xylose isomerase (439 aa).

Residues histidine 101 and aspartate 104 contribute to the active site. Residues glutamate 232, glutamate 268, histidine 271, aspartate 296, aspartate 307, aspartate 309, and aspartate 339 each coordinate Mg(2+).

Belongs to the xylose isomerase family. Homotetramer. Requires Mg(2+) as cofactor.

It localises to the cytoplasm. It catalyses the reaction alpha-D-xylose = alpha-D-xylulofuranose. This is Xylose isomerase from Pectobacterium atrosepticum (strain SCRI 1043 / ATCC BAA-672) (Erwinia carotovora subsp. atroseptica).